The chain runs to 999 residues: Bifunctional glutamine synthetase adenylyltransferase/adenylyl-removing enzyme (999 aa).

Residues 1–483 (MTPGRRSSTF…LHEKLFYRPL (483 aa)) are adenylyl removase. The tract at residues 489–999 (QLAPGEARLS…RTVVEDLFYA (511 aa)) is adenylyl transferase.

This sequence belongs to the GlnE family. Mg(2+) is required as a cofactor.

The enzyme catalyses [glutamine synthetase]-O(4)-(5'-adenylyl)-L-tyrosine + phosphate = [glutamine synthetase]-L-tyrosine + ADP. It catalyses the reaction [glutamine synthetase]-L-tyrosine + ATP = [glutamine synthetase]-O(4)-(5'-adenylyl)-L-tyrosine + diphosphate. In terms of biological role, adenylation and deadenylation of glutamate--ammonia ligase. Its function is as follows. Involved in the regulation of glutamine synthetase GlnA, a key enzyme in the process to assimilate ammonia. When cellular nitrogen levels are high, the C-terminal adenylyl transferase (AT) inactivates GlnA by covalent transfer of an adenylyl group from ATP to specific tyrosine residue of GlnA, thus reducing its activity. Conversely, when nitrogen levels are low, the N-terminal adenylyl removase (AR) activates GlnA by removing the adenylyl group by phosphorolysis, increasing its activity. The regulatory region of GlnE binds the signal transduction protein PII (GlnB) which indicates the nitrogen status of the cell. This Streptomyces coelicolor (strain ATCC BAA-471 / A3(2) / M145) protein is Bifunctional glutamine synthetase adenylyltransferase/adenylyl-removing enzyme.